Consider the following 185-residue polypeptide: NEDD8-conjugating enzyme UBE2F (185 aa).

The segment at M1–R29 is disordered. The interval M1–R29 is interaction with uba3. One can recognise a UBC core domain in the interval V32–R185. Catalysis depends on C116, which acts as the Glycyl thioester intermediate.

This sequence belongs to the ubiquitin-conjugating enzyme family. UBE2F subfamily.

The catalysed reaction is [E1 NEDD8-activating enzyme]-S-[NEDD8 protein]-yl-L-cysteine + [E2 NEDD8-conjugating enzyme]-L-cysteine = [E1 NEDD8-activating enzyme]-L-cysteine + [E2 NEDD8-conjugating enzyme]-S-[NEDD8-protein]-yl-L-cysteine.. Its pathway is protein modification; protein neddylation. Functionally, accepts the ubiquitin-like protein NEDD8 from the UBA3-NAE1 E1 complex and catalyzes its covalent attachment to other proteins. Together with the E3 ubiquitin ligase rnf7/rbx2, specifically neddylates cullin-5 (cul5). Does not neddylate cul1, cul2, cul3, cul4a or cul4b. In Xenopus tropicalis (Western clawed frog), this protein is NEDD8-conjugating enzyme UBE2F (ube2f).